The chain runs to 94 residues: Myosuppressin (94 aa).

An N-terminal signal peptide occupies residues 1-24 (MMSPTLMILISITTMAILSGESFG). Positions 25–80 (AMPAQCNSEFLEELPPRLRKICVAIARIWDAREMNDFVDDREYRENLPRYDSSVKR) are excised as a propeptide. A Pyrrolidone carboxylic acid modification is found at Gln-81. Phe-90 is modified (phenylalanine amide).

In terms of tissue distribution, expressed throughout the nervous system (at protein level).

Its subcellular location is the secreted. Myoinhibiting neuropeptide. This is Myosuppressin from Camponotus floridanus (Florida carpenter ant).